An 89-amino-acid chain; its full sequence is uncharacterized protein (89 aa).

3 helical membrane-spanning segments follow: residues 5 to 25 (AYLVLINLCGFWVMGIDKRKA), 36 to 56 (RLWLIAIVFGALGVWLGMQTF), and 67 to 87 (YGVPLLLVIEAILIAIYYSPF).

It localises to the cell membrane. This is an uncharacterized protein from Bacillus subtilis (strain 168).